Consider the following 337-residue polypeptide: S-adenosylmethionine:tRNA ribosyltransferase-isomerase (337 aa).

This sequence belongs to the QueA family. As to quaternary structure, monomer.

It is found in the cytoplasm. The enzyme catalyses 7-aminomethyl-7-carbaguanosine(34) in tRNA + S-adenosyl-L-methionine = epoxyqueuosine(34) in tRNA + adenine + L-methionine + 2 H(+). It participates in tRNA modification; tRNA-queuosine biosynthesis. In terms of biological role, transfers and isomerizes the ribose moiety from AdoMet to the 7-aminomethyl group of 7-deazaguanine (preQ1-tRNA) to give epoxyqueuosine (oQ-tRNA). This is S-adenosylmethionine:tRNA ribosyltransferase-isomerase from Legionella pneumophila (strain Lens).